A 236-amino-acid polypeptide reads, in one-letter code: Ribonuclease 3 (236 aa).

In terms of domain architecture, RNase III spans 8–130 (FRRLSQALDY…TFAAVSFDAD (123 aa)). Glutamate 43 lines the Mg(2+) pocket. Aspartate 47 is a catalytic residue. Mg(2+)-binding residues include aspartate 116 and glutamate 119. The active site involves glutamate 119. The region spanning 157-227 (DAKTRLQEAL…AEAALTLLEQ (71 aa)) is the DRBM domain.

The protein belongs to the ribonuclease III family. As to quaternary structure, homodimer. The cofactor is Mg(2+).

Its subcellular location is the cytoplasm. It carries out the reaction Endonucleolytic cleavage to 5'-phosphomonoester.. In terms of biological role, digests double-stranded RNA. Involved in the processing of primary rRNA transcript to yield the immediate precursors to the large and small rRNAs (23S and 16S). Processes some mRNAs, and tRNAs when they are encoded in the rRNA operon. Processes pre-crRNA and tracrRNA of type II CRISPR loci if present in the organism. This Chromobacterium violaceum (strain ATCC 12472 / DSM 30191 / JCM 1249 / CCUG 213 / NBRC 12614 / NCIMB 9131 / NCTC 9757 / MK) protein is Ribonuclease 3.